A 101-amino-acid chain; its full sequence is Protein SSXA1 (101 aa).

The KRAB-related domain occupies 19–83; the sequence is ETCQAFEDIS…ERVTKSVLSD (65 aa). The disordered stretch occupies residues 73–101; it reads KERVTKSVLSDSDEVSSHESQDKRKNPVV. Residues 87–101 show a composition bias toward basic and acidic residues; sequence VSSHESQDKRKNPVV.

This sequence belongs to the SSX family. In terms of tissue distribution, specifically expressed in testis (at protein level). Not detected in other tissues tested (at protein level).

The protein resides in the nucleus. Could act as a modulator of transcription. This Mus musculus (Mouse) protein is Protein SSXA1.